Consider the following 2112-residue polypeptide: MIEEQRTMSVEGADQQSEKLFHYLKKVAVELDETRARLREYEQRATEPVAVVGIGCRFPGGVDGPDGLWDVVSAGRDVVSEFPTDRGWDVEGLYDPDPDAEGKTYTRWGAFLDDATGFDAGFFGIAPSEVLAMDPQQRLMLEVSWEALEHAGIDPLSLRGSATGVYTGIFAASYGNRDTGGLQGYGLTGTSISVASGRVSYVLGLQGPAVSVDTACSSSLVAIHWAMSSLRSGECDLALAGGVTVMGLPSIFVGFSRQRGLAADGRCKAFAAAADGTGWGEGAGVVVLERLSDARRLGHSVLAVVRGSAVNQDGASNGLTAPNGLAQQRVIQAALANAGLSAADVDVVEAHGTATTLGDPIEAQALLSTYGQGRPAEQPLWVGSIKSNMGHTQAAAGVAGVIKMVQAMRHGVMPATLHVDEPSPRVDWTSGAVSVLTEAREWSVDGRPRRAAVSSFGISGTNAHLILEEAPVPAPAEAPVEASESTGGPRPSMVPWVISARSAEALTAQAGRLMAHVQANPGLDPIDVGCSLASRSVFEHRAVVVGASREQLIAGLAGLAAGEPGAGVAVGQPGSVGKTVVVFPGQGAQRIGMGRELYGELPVFAQAFDAVADELDRHLRLPLRDVIWGADADLLDSTEFAQPALFAVEVASFAVLRDWGVLPDFVMGHSVGELAAAHAAGVLTLADAAMLVVARGRLMQALPAGGAMVAVAASEDEVEPLLGEGVGIAAINAPESVVISGAQAAANAIADRFAAQGRRVHQLAVSHAFHSPLMEPMLEEFARVAARVQAREPQLGLVSNVTGELAGPDFGSAQYWVDHVRRPVRFADSARHLQTLGATHFIEAGPGSGLTGSIEQSLAPAEAMVVSMLGKDRPELASALGAAGQVFTTGVPVQWSAVFAGSGGRRVQLPTYAFQRRRFWETPGADGPADAAGLGLGATEHALLGAVVERPDSDEVVLTGRLSLADQPWLADHVVNGVVLFPGAGFVELVIRAGDEVGCALIEELVLAAPLVMHPGVGVQVQVVVGAADESGHRAVSVYSRGDQSQGWLLNAEGMLGVAAAETPMDLSVWPPEGAESVDISDGYAQLAERGYAYGPAFQGLVAIWRRGSELFAEVVAPGEAGVAVDRMGMHPAVLDAVLHALGLAVEKTQASTETRLPFCWRGVSLHAGGAGRVRARFASAGADAISVDVCDATGLPVLTVRSLVTRPITAEQLRAAVTAAGGASDQGPLEVVWSPISVVSGGANGSAPPAPVSWADFCAGSDGDASVVVWELESAGGQASSVVGSVYAATHTALEVLQSWLGADRAATLVVLTHGGVGLAGEDISDLAAAAVWGMARSAQAENPGRIVLIDTDAAVDASVLAGVGEPQLLVRGGTVHAPRLSPAPALLALPAAESAWRLAAGGGGTLEDLVIQPCPEVQAPLQAGQVRVAVAAVGVNFRDVVAALGMYPGQAPPLGAEGAGVVLETGPEVTDLAVGDAVMGFLGGAGPLAVVDQQLVTRVPQGWSFAQAAAVPVVFLTAWYGLADLAEIKAGESVLIHAGTGGVGMAAVQLARQWGVEVFVTASRGKWDTLRAMGFDDDHIGDSRTCEFEEKFLAVTEGRGVDVVLDSLAGEFVDASLRLLVRGGRFLEMGKTDIRDAQEIAANYPGVQYRAFDLSEAGPARMQEMLAEVRELFDTRELHRLPVTTWDVRCAPAAFRFMSQARHIGKVVLTMPSALADRLADGTVVITGATGAVGGVLARHLVGAYGVRHLVLASRRGDRAEGAAELAADLTEAGAKGQVVACDVADRAAVAGLFAQLSREYPPVRGVIHAAGVLDDAVITSLTPDRIDTVLRAKVDAAWNLHQATSDLDLSMFVLCSSIAATVGSPGQGNYSAANAFLDGLAAHRQAAGLAGISLAWGLWEQPGGMTAHLSSRDLARMSRSGLAPMSPAEAVELFDAALAIDHPLAVATLLDRAALDARAQAGALPALFSGLARRPRRRQIDDTGDATSSKSALAQRLHGLAADEQLELLVGLVCLQAAAVLGRPSAEDVDPDTEFGDLGFDSLTAVELRNRLKTATGLTLPPTVIFDHPTPTAVAEYVAQQMSGSRPTESGDPTSQVVEPAAAEVSVHA.

Positions 46–469 (TEPVAVVGIG…GTNAHLILEE (424 aa)) constitute a Ketosynthase family 3 (KS3) domain. Residues cysteine 216, histidine 351, and histidine 391 each act as for beta-ketoacyl synthase activity in the active site. An acyltransferase region spans residues 579-893 (TVVVFPGQGA…GQVFTTGVPV (315 aa)). Residue serine 670 is the For acyltransferase activity of the active site. The tract at residues 941–1063 (HALLGAVVER…GMLGVAAAET (123 aa)) is N-terminal hotdog fold. Residues 941-1101 (HALLGAVVER…YAYGPAFQGL (161 aa)) form a dehydratase region. A PKS/mFAS DH domain is found at 941–1215 (HALLGAVVER…TRPITAEQLR (275 aa)). Residue histidine 973 is the Proton acceptor; for dehydratase activity of the active site. A C-terminal hotdog fold region spans residues 1075-1215 (AESVDISDGY…TRPITAEQLR (141 aa)). Aspartate 1136 functions as the Proton donor; for dehydratase activity in the catalytic mechanism. The tract at residues 1406–1711 (GTLEDLVIQP…QARHIGKVVL (306 aa)) is enoylreductase. NADP(+)-binding positions include 1536 to 1553 (VLIH…VQLA) and 1725 to 1740 (TVVI…GVLA). The beta-ketoacyl reductase stretch occupies residues 1724–1905 (GTVVITGATG…SLAWGLWEQP (182 aa)). A Carrier domain is found at 2010 to 2085 (ELLVGLVCLQ…AVAEYVAQQM (76 aa)). An O-(pantetheine 4'-phosphoryl)serine modification is found at serine 2045. The segment covering 2084 to 2100 (QMSGSRPTESGDPTSQV) has biased composition (polar residues). The disordered stretch occupies residues 2084 to 2112 (QMSGSRPTESGDPTSQVVEPAAAEVSVHA).

It belongs to the thiolase-like superfamily. Beta-ketoacyl-ACP synthases family. The cofactor is pantetheine 4'-phosphate.

The enzyme catalyses a fatty acyl-[ACP] + malonyl-[ACP] + H(+) = a 3-oxoacyl-[ACP] + holo-[ACP] + CO2. Its pathway is lipid metabolism; fatty acid biosynthesis. Functionally, catalyzes the elongation by iterative transfer of p-hydroxybenzoyl group from FadD22 (pHBA-S-FAdD22) to form p-hydroxyphenylalkanoate (pHPA) intermediates during phenolphthiocerol (PPOL) biosynthesis. PPOL is an important intermediate in the biosynthesis of phenolic glycolipid (mycosid B). The protein is Phenolphthiocerol synthesis polyketide synthase type I Pks15/1 (pks15/1) of Mycobacterium bovis (strain ATCC BAA-935 / AF2122/97).